Reading from the N-terminus, the 338-residue chain is Limbic system-associated membrane protein (338 aa).

An N-terminal signal peptide occupies residues 1 to 28 (MVGRVQPDRKQLPLVLLRLLCLLPTGLP). Ig-like C2-type domains are found at residues 29–122 (VRSV…PKTS), 132–214 (PKIS…VKVT), and 219–304 (PTIT…ASLV). 2 N-linked (GlcNAc...) asparagine glycosylation sites follow: asparagine 40 and asparagine 66. Cysteines 53 and 111 form a disulfide. Residue tyrosine 94 is modified to Phosphotyrosine. Residues asparagine 136 and asparagine 148 are each glycosylated (N-linked (GlcNAc...) asparagine). Intrachain disulfides connect cysteine 153–cysteine 197 and cysteine 239–cysteine 290. Asparagine 279, asparagine 287, and asparagine 300 each carry an N-linked (GlcNAc...) asparagine glycan. Asparagine 315 carries the GPI-anchor amidated asparagine; alternate lipid modification. The N-linked (GlcNAc...) asparagine; alternate glycan is linked to asparagine 315. Residues 316–338 (GSISLAVPLWLLAASLFCLLSKC) constitute a propeptide, removed in mature form.

It belongs to the immunoglobulin superfamily. IgLON family. As to expression, expressed mostly by neurons comprising limbic-associated cortical and subcortical regions that function in cognition, emotion, memory, and learning.

The protein resides in the cell membrane. Mediates selective neuronal growth and axon targeting. Contributes to the guidance of developing axons and remodeling of mature circuits in the limbic system. Essential for normal growth of the hippocampal mossy fiber projection. The sequence is that of Limbic system-associated membrane protein (Lsamp) from Rattus norvegicus (Rat).